Reading from the N-terminus, the 241-residue chain is Probable cobalt-factor III C(17)-methyltransferase (241 aa).

It belongs to the precorrin methyltransferase family.

It catalyses the reaction Co(II)-factor III + S-adenosyl-L-methionine + H(+) = Co(II)-factor IV + S-adenosyl-L-homocysteine. Its pathway is cofactor biosynthesis; adenosylcobalamin biosynthesis; cob(II)yrinate a,c-diamide from sirohydrochlorin (anaerobic route): step 3/10. In terms of biological role, methyltransferase that likely catalyzes the ring contraction and methylation of C-17 in cobalt-factor III to form cobalt-factor IV. May also convert cobalt-precorrin-3 to cobalt-precorrin-4. This chain is Probable cobalt-factor III C(17)-methyltransferase (cbiH), found in Salmonella typhimurium (strain LT2 / SGSC1412 / ATCC 700720).